The primary structure comprises 67 residues: Prokaryotic ubiquitin-like protein Pup (67 aa).

Positions 1 to 26 (MATKETGGQKHATRRNQEVEEIEVTT) are disordered. Residues 23 to 61 (EVTTETSVRNEKLAEDVDDILDEIDEVLESNAEDFVRQF) are ARC ATPase binding. Residues 27-55 (ETSVRNEKLAEDVDDILDEIDEVLESNAE) are a coiled coil. Glu-67 participates in a covalent cross-link: Isoglutamyl lysine isopeptide (Glu-Lys) (interchain with K-? in acceptor proteins).

This sequence belongs to the prokaryotic ubiquitin-like protein family. As to quaternary structure, strongly interacts with the proteasome-associated ATPase ARC through a hydrophobic interface; the interacting region of Pup lies in its C-terminal half. There is one Pup binding site per ARC hexamer ring.

The protein operates within protein degradation; proteasomal Pup-dependent pathway. Protein modifier that is covalently attached to lysine residues of substrate proteins, thereby targeting them for proteasomal degradation. The tagging system is termed pupylation. The protein is Prokaryotic ubiquitin-like protein Pup of Thermobifida fusca (strain YX).